Reading from the N-terminus, the 93-residue chain is UPF0473 protein RBAM_024480 (93 aa).

The protein belongs to the UPF0473 family.

The sequence is that of UPF0473 protein RBAM_024480 from Bacillus velezensis (strain DSM 23117 / BGSC 10A6 / LMG 26770 / FZB42) (Bacillus amyloliquefaciens subsp. plantarum).